The following is a 270-amino-acid chain: Phosphatidylglycerol--prolipoprotein diacylglyceryl transferase (270 aa).

4 helical membrane-spanning segments follow: residues 18–38 (IAVH…LWLA), 55–75 (LVLF…VIFQ), 89–109 (IWNG…TGII), and 115–135 (GLSF…GQAI). Arg-137 serves as a coordination point for a 1,2-diacyl-sn-glycero-3-phospho-(1'-sn-glycerol). Helical transmembrane passes span 177-197 (QPTF…LLLL), 205-225 (GELF…IEGL), and 236-256 (LRIA…LIAY).

The protein belongs to the Lgt family.

It is found in the cell membrane. The catalysed reaction is L-cysteinyl-[prolipoprotein] + a 1,2-diacyl-sn-glycero-3-phospho-(1'-sn-glycerol) = an S-1,2-diacyl-sn-glyceryl-L-cysteinyl-[prolipoprotein] + sn-glycerol 1-phosphate + H(+). The protein operates within protein modification; lipoprotein biosynthesis (diacylglyceryl transfer). Functionally, catalyzes the transfer of the diacylglyceryl group from phosphatidylglycerol to the sulfhydryl group of the N-terminal cysteine of a prolipoprotein, the first step in the formation of mature lipoproteins. In Bacillus licheniformis (strain ATCC 14580 / DSM 13 / JCM 2505 / CCUG 7422 / NBRC 12200 / NCIMB 9375 / NCTC 10341 / NRRL NRS-1264 / Gibson 46), this protein is Phosphatidylglycerol--prolipoprotein diacylglyceryl transferase.